We begin with the raw amino-acid sequence, 327 residues long: Serine/threonine-protein phosphatase 4 regulatory subunit ppfr-4 (327 aa).

Positions 141 to 185 form a coiled coil; it reads KLAVEEIRRLKLERHKKKQELKMAELRIQKQLEAVSIDEQNLREL. A disordered region spans residues 271–327; it reads KFGHNPQNAPQSSAPAGAEAQESEEEVDDDEARAKAMRWDEYKDDHRRGWGNMHNKG. Residues 275–284 are compositionally biased toward polar residues; sequence NPQNAPQSSA. The segment covering 291-301 has biased composition (acidic residues); the sequence is QESEEEVDDDE. Residues 302–318 show a composition bias toward basic and acidic residues; it reads ARAKAMRWDEYKDDHRR.

Serine/threonine-protein phosphatase 4 (PP4) occurs in different assemblies of the catalytic and one or more regulatory subunits. The catalytic subunit is likely to be pph-4.1.

Probable regulatory subunit of serine/threonine-protein phosphatase PP4 which may play a role in meiosis and embryonic mitosis. Probably in association with catalytic subunit pph-4.1, regulates microtubule severing during oocyte meiosis II by dephosphorylating and likely activating mei-1, a component of the katanin microtubule severing complex. The polypeptide is Serine/threonine-protein phosphatase 4 regulatory subunit ppfr-4 (Caenorhabditis elegans).